We begin with the raw amino-acid sequence, 114 residues long: T cell receptor beta variable 10-2 (114 aa).

The signal sequence occupies residues 1 to 21 (MGTRLFFYVALCLLWAGHRDA). An Ig-like domain is found at 22-114 (GITQSPRYKI…TSVYFCASSE (93 aa)). An intrachain disulfide couples C42 to C110.

As to quaternary structure, alpha-beta TR is a heterodimer composed of an alpha and beta chain; disulfide-linked. The alpha-beta TR is associated with the transmembrane signaling CD3 coreceptor proteins to form the TR-CD3 (TcR or TCR). The assembly of alpha-beta TR heterodimers with CD3 occurs in the endoplasmic reticulum where a single alpha-beta TR heterodimer associates with one CD3D-CD3E heterodimer, one CD3G-CD3E heterodimer and one CD247 homodimer forming a stable octameric structure. CD3D-CD3E and CD3G-CD3E heterodimers preferentially associate with TR alpha and TR beta chains, respectively. The association of the CD247 homodimer is the last step of TcR assembly in the endoplasmic reticulum and is required for transport to the cell surface.

Its subcellular location is the cell membrane. V region of the variable domain of T cell receptor (TR) beta chain that participates in the antigen recognition. Alpha-beta T cell receptors are antigen specific receptors which are essential to the immune response and are present on the cell surface of T lymphocytes. Recognize peptide-major histocompatibility (MH) (pMH) complexes that are displayed by antigen presenting cells (APC), a prerequisite for efficient T cell adaptive immunity against pathogens. Binding of alpha-beta TR to pMH complex initiates TR-CD3 clustering on the cell surface and intracellular activation of LCK that phosphorylates the ITAM motifs of CD3G, CD3D, CD3E and CD247 enabling the recruitment of ZAP70. In turn ZAP70 phosphorylates LAT, which recruits numerous signaling molecules to form the LAT signalosome. The LAT signalosome propagates signal branching to three major signaling pathways, the calcium, the mitogen-activated protein kinase (MAPK) kinase and the nuclear factor NF-kappa-B (NF-kB) pathways, leading to the mobilization of transcription factors that are critical for gene expression and essential for T cell growth and differentiation. The T cell repertoire is generated in the thymus, by V-(D)-J rearrangement. This repertoire is then shaped by intrathymic selection events to generate a peripheral T cell pool of self-MH restricted, non-autoaggressive T cells. Post-thymic interaction of alpha-beta TR with the pMH complexes shapes TR structural and functional avidity. This chain is T cell receptor beta variable 10-2, found in Homo sapiens (Human).